A 299-amino-acid chain; its full sequence is Nucleotide-binding protein RER_30260 (299 aa).

Position 19–26 (19–26 (GLSGAGLS)) interacts with ATP. 70-73 (DVRS) lines the GTP pocket.

This sequence belongs to the RapZ-like family.

Displays ATPase and GTPase activities. In Rhodococcus erythropolis (strain PR4 / NBRC 100887), this protein is Nucleotide-binding protein RER_30260.